We begin with the raw amino-acid sequence, 210 residues long: Probable GTP-binding protein EngB (210 aa).

An EngB-type G domain is found at 30 to 204; it reads QGYEVAFAGR…YRVLADWMEL (175 aa). Residues 38–45, 64–68, 82–85, 149–152, and 182–185 each bind GTP; these read GRSNAGKS, GRTQL, DLPG, TKAD, and LFSA. 2 residues coordinate Mg(2+): S45 and T66.

This sequence belongs to the TRAFAC class TrmE-Era-EngA-EngB-Septin-like GTPase superfamily. EngB GTPase family. Mg(2+) serves as cofactor.

In terms of biological role, necessary for normal cell division and for the maintenance of normal septation. This is Probable GTP-binding protein EngB from Pseudomonas putida (strain ATCC 700007 / DSM 6899 / JCM 31910 / BCRC 17059 / LMG 24140 / F1).